A 412-amino-acid chain; its full sequence is MQKYCIYQHFQFQLLIQHLWIAANCDIADERFDATFHTNVLVNSSGHCQYLPPGIFKSSCYIDVRWFPFDVQHCKLKFGSWSYGGWSLDLQMQEADISGYIPNGEWDLVGIPGKRSERFYECCKEPYPDVTFTVTMRRRTLYYGLNLLIPCVLISALALLVFLLPADSGEKISLGITVLLSLTVFMLLVAEIMPATSDSVPLIAQYFASTMIIVGLSVVVTVIVLQYHHHDPDGGKMPKWTRVILLNWCAWFLRMKRPGEDKVRPACQHKQRRCSLASVEMSAVAPPPASNGNLLYIGFRGLDGVHCVPTPDSGVVCGRMACSPTHDEHLLHGGQPPEGDPDLAKILEEVRYIANRFRCQDESEAVCSEWKFAACVVDRLCLMAFSVFTIICTIGILMSAPNFVEAVSKDFA.

5 helical membrane passes run 144-164, 172-192, 205-225, 240-254, and 380-400; these read GLNL…VFLL, ISLG…VAEI, QYFA…VIVL, WTRV…WFLR, and LCLM…LMSA.

It belongs to the ligand-gated ion channel (TC 1.A.9) family. As to expression, expressed in hippocampus.

The protein resides in the membrane. This chain is CHRNA7-FAM7A fusion protein (CHRFAM7A), found in Homo sapiens (Human).